The primary structure comprises 362 residues: MAQVFNFSSGPAMLPADVLKQAQQELCDWNGLGTSVMEISHRGKEFIKVAEEAEHDFRELLNVPSNYKVLFCHGGGRGQFAAVPLNILGDKTTADYVDAGYWAASAIKEAKKYCTPNVFDAKVTVDGLRAVKPMREWQLSDNAAYLHYCPNETIDGIAIDETPDFGNEVVVAADFSSTILSRPIDVSRYGVIYAGAQKNIGPAGLTIVIVREDLLGKANIACPSILDYSILNDNDSMFNTPPTFAWYLSGLVFKWLKANGGVAAMDKINQQKAELLYGAIDNSDFYRNDVAKANRSRMNVPFQLADNALDKLFLEESFAAGLHALKGHRVVGGMRASIYNAMPLEGVIALTDFMADFERRHG.

S9 and R42 together coordinate L-glutamate. Residues 76-77 (GR), W102, T153, D174, and Q197 contribute to the pyridoxal 5'-phosphate site. K198 bears the N6-(pyridoxal phosphate)lysine mark. Pyridoxal 5'-phosphate is bound at residue 239-240 (NT).

The protein belongs to the class-V pyridoxal-phosphate-dependent aminotransferase family. SerC subfamily. As to quaternary structure, homodimer. The cofactor is pyridoxal 5'-phosphate.

The protein resides in the cytoplasm. The enzyme catalyses O-phospho-L-serine + 2-oxoglutarate = 3-phosphooxypyruvate + L-glutamate. The catalysed reaction is 4-(phosphooxy)-L-threonine + 2-oxoglutarate = (R)-3-hydroxy-2-oxo-4-phosphooxybutanoate + L-glutamate. It participates in amino-acid biosynthesis; L-serine biosynthesis; L-serine from 3-phospho-D-glycerate: step 2/3. The protein operates within cofactor biosynthesis; pyridoxine 5'-phosphate biosynthesis; pyridoxine 5'-phosphate from D-erythrose 4-phosphate: step 3/5. Functionally, catalyzes the reversible conversion of 3-phosphohydroxypyruvate to phosphoserine and of 3-hydroxy-2-oxo-4-phosphonooxybutanoate to phosphohydroxythreonine. This is Phosphoserine aminotransferase from Escherichia fergusonii (strain ATCC 35469 / DSM 13698 / CCUG 18766 / IAM 14443 / JCM 21226 / LMG 7866 / NBRC 102419 / NCTC 12128 / CDC 0568-73).